Reading from the N-terminus, the 277-residue chain is Inorganic pyrophosphatase (277 aa).

Arginine 80 provides a ligand contact to diphosphate. Mg(2+) contacts are provided by aspartate 117, aspartate 122, and aspartate 154.

This sequence belongs to the PPase family. It depends on Mg(2+) as a cofactor.

It is found in the cytoplasm. It catalyses the reaction diphosphate + H2O = 2 phosphate + H(+). In terms of biological role, involved in osmoadaptation. The protein is Inorganic pyrophosphatase (IPP1) of Encephalitozoon cuniculi (strain GB-M1) (Microsporidian parasite).